The chain runs to 221 residues: Translation initiation factor 6 (221 aa).

It belongs to the eIF-6 family.

In terms of biological role, binds to the 50S ribosomal subunit and prevents its association with the 30S ribosomal subunit to form the 70S initiation complex. This Nitrosopumilus maritimus (strain SCM1) protein is Translation initiation factor 6.